Consider the following 191-residue polypeptide: ATP-dependent dethiobiotin synthetase BioD 2 (191 aa).

Position 13-18 (13-18) interacts with ATP; it reads DVGKTI. T17 is a Mg(2+) binding site. Residue K38 is part of the active site. A substrate-binding site is contributed by T42. Residues D50 and 115 to 118 contribute to the ATP site; that span reads EGAG. Mg(2+) is bound by residues D50 and E115.

It belongs to the dethiobiotin synthetase family. As to quaternary structure, homodimer. The cofactor is Mg(2+).

The protein localises to the cytoplasm. It catalyses the reaction (7R,8S)-7,8-diammoniononanoate + CO2 + ATP = (4R,5S)-dethiobiotin + ADP + phosphate + 3 H(+). The protein operates within cofactor biosynthesis; biotin biosynthesis; biotin from 7,8-diaminononanoate: step 1/2. Catalyzes a mechanistically unusual reaction, the ATP-dependent insertion of CO2 between the N7 and N8 nitrogen atoms of 7,8-diaminopelargonic acid (DAPA, also called 7,8-diammoniononanoate) to form a ureido ring. This chain is ATP-dependent dethiobiotin synthetase BioD 2, found in Haemophilus influenzae (strain ATCC 51907 / DSM 11121 / KW20 / Rd).